The primary structure comprises 236 residues: 2-C-methyl-D-erythritol 4-phosphate cytidylyltransferase (236 aa).

The protein belongs to the IspD/TarI cytidylyltransferase family. IspD subfamily.

The catalysed reaction is 2-C-methyl-D-erythritol 4-phosphate + CTP + H(+) = 4-CDP-2-C-methyl-D-erythritol + diphosphate. The protein operates within isoprenoid biosynthesis; isopentenyl diphosphate biosynthesis via DXP pathway; isopentenyl diphosphate from 1-deoxy-D-xylulose 5-phosphate: step 2/6. Catalyzes the formation of 4-diphosphocytidyl-2-C-methyl-D-erythritol from CTP and 2-C-methyl-D-erythritol 4-phosphate (MEP). The protein is 2-C-methyl-D-erythritol 4-phosphate cytidylyltransferase of Burkholderia orbicola (strain AU 1054).